A 1087-amino-acid polypeptide reads, in one-letter code: Period circadian protein (1087 aa).

Over residues 1–14 (MEGESTESTHNTKV) the composition is skewed to polar residues. 2 disordered regions span residues 1–98 (MEGE…EQTE) and 123–153 (GAPTPSDAHDAHGDKPQLDVDEQQDDPQAEQ). Positions 15–46 (SDSAYSNSCSNSQSQRSGSSKSRLSGSHSSGS) are enriched in low complexity. A Nuclear localization signal motif is present at residues 65–78 (KRNKDKSRKKKKAK). Basic residues predominate over residues 65 to 78 (KRNKDKSRKKKKAK). Residues 79-93 (SPAQATAATTTTIKS) are compositionally biased toward low complexity. Residues 129 to 140 (DAHDAHGDKPQL) show a composition bias toward basic and acidic residues. Acidic residues predominate over residues 141 to 150 (DVDEQQDDPQ). 2 consecutive PAS domains span residues 220–355 (DSFC…ATPI) and 373–479 (FAIQ…RVFQ). Disordered regions lie at residues 613 to 692 (PVTA…NPLP), 736 to 759 (MPEYSGPGHGQTMKRGGSHSWEGD), 871 to 893 (SSASAAQHSPKSSENPSTSQPEA), and 956 to 1087 (TTTQ…HGDG). Over residues 655 to 664 (NLTTASNVRM) the composition is skewed to polar residues. A compositionally biased stretch (low complexity) spans 665–689 (SSVTNTSNTGTGTSGGENSASGSSN). Composition is skewed to polar residues over residues 877 to 892 (QHSPKSSENPSTSQPE) and 1003 to 1024 (LPSTSARRGSSSDQRNNSNNPK). Low complexity predominate over residues 1028-1047 (DSNGNSDDMDGSSFSSFYSS). The segment covering 1060-1087 (DNEKETKVHKLKPIVEHPEEDQTQHGDG) has biased composition (basic and acidic residues).

In terms of assembly, forms a heterodimer with timeless (TIM); the complex then translocates into the nucleus. Post-translationally, phosphorylated with a circadian rhythmicity, probably by the double-time protein (dbt). Phosphorylation could be implicated in the stability of per monomer and in the formation of heterodimer per-tim.

It is found in the nucleus. The protein resides in the cytoplasm. Its subcellular location is the perinuclear region. Functionally, essential for biological clock functions. Determines the period length of circadian and ultradian rhythms; an increase in PER dosage leads to shortened circadian rhythms and a decrease leads to lengthened circadian rhythms. Essential for the circadian rhythmicity of locomotor activity, eclosion behavior, and for the rhythmic component of the male courtship song that originates in the thoracic nervous system. The biological cycle depends on the rhythmic formation and nuclear localization of the TIM-PER complex. Light induces the degradation of TIM, which promotes elimination of PER. Nuclear activity of the heterodimer coordinatively regulates PER and TIM transcription through a negative feedback loop. Behaves as a negative element in circadian transcriptional loop. Does not appear to bind DNA, suggesting indirect transcriptional inhibition. This is Period circadian protein (per) from Drosophila virilis (Fruit fly).